A 2422-amino-acid chain; its full sequence is Non-reducing polyketide synthase trt4 (2422 aa).

The tract at residues 14 to 196 is N-terminal acylcarrier protein transacylase domain (SAT); sequence VLFGPKCPKT…HHSDHTSVVQ (183 aa). The tract at residues 289–314 is disordered; the sequence is VEPPDSHHNTNTTQDSDVTTNASPLT. A compositionally biased stretch (polar residues) spans 297-312; the sequence is NTNTTQDSDVTTNASP. The region spanning 329–745 is the Ketosynthase family 3 (KS3) domain; sequence TVPIAVTGMA…GSNAAIVLQE (417 aa). Active-site for beta-ketoacyl synthase activity residues include Cys-494, His-629, and His-668. A malonyl-CoA:ACP transacylase (MAT) domain region spans residues 856 to 1121; the sequence is LCFGGQTGNT…CPIDLSGPQA (266 aa). Ser-904 serves as the catalytic For acyl/malonyl transferase activity. An N-terminal hotdog fold region spans residues 1190–1316; that stretch reads PSLVKLLNND…GKISISSEAN (127 aa). The PKS/mFAS DH domain maps to 1190–1495; sequence PSLVKLLNND…FTCVSIQSLK (306 aa). The product template (PT) domain stretch occupies residues 1191 to 1494; the sequence is SLVKLLNNDG…TFTCVSIQSL (304 aa). His-1221 functions as the Proton acceptor; for dehydratase activity in the catalytic mechanism. The interval 1345–1495 is C-terminal hotdog fold; sequence SSGLKRSTVY…FTCVSIQSLK (151 aa). Residue Asp-1402 is the Proton donor; for dehydratase activity of the active site. The Carrier domain maps to 1535–1612; sequence SRSEDGLRVV…GLVQRIFPGG (78 aa). O-(pantetheine 4'-phosphoryl)serine is present on Ser-1572. The tract at residues 1615 to 1636 is disordered; sequence AHVETHSQPPDKIGITTGDRMP. A methyltransferase (CMeT) domain region spans residues 1774 to 2007; that stretch reads QHASEHKLLH…GFNWVDWTDN (234 aa). Residues 2036–2383 are thioesterase (TE) domain; sequence NAVAEETLVY…LAPHIPTDEY (348 aa). Active-site for thioesterase activity residues include Ser-2159, Asp-2320, and His-2352.

It catalyses the reaction 3 malonyl-CoA + acetyl-CoA + 2 S-adenosyl-L-methionine = 3,5-dimethylorsellinate + 2 S-adenosyl-L-homocysteine + 3 CO2 + 4 CoA. It participates in secondary metabolite biosynthesis; terpenoid biosynthesis. Its function is as follows. Non-reducing polyketide synthase; part of the gene cluster that mediates the biosynthesis of terretonin, a fungal meroterpenoid that acts as a mycotoxin. The first step of the pathway is the synthesis of 3,5-dimethylorsellinic acid (DMOA) by the polyketide synthase trt4. DMOA is then prenylated into farnesyl-DMOA by the polyprenyl transferase trt2. Methylation by the methyltransferase trt5 then leads to farnesyl-DMOA methyl ester which is further subject to epoxidation by the FAD-dependent monooxygenase trt8 to yield epoxyfarnesyl-DMOA methyl ester. Cyclization of epoxyfarnesyl-DMOA methyl ester by the terpene cyclase trt1 leads to a tetracycle intermediate which is in turn converted to preterretonin. Dehydrogenase trt9 comes next to transform preterretonin to preterrenoid. The FAD-dependent monooxygenase trt3 is then required for the C-hydroxylation at C16 of preterrenoid to yield terrenoid. The cytochrome P450 trt6 catalyzes three successive oxidations to transform terrenoid into an unstable intermediate, which then undergoes the D-ring expansion and unusual rearrangement of the methoxy group to afford the core skeleton of terretonin. Trt14 catalyzes the D-ring expansion of terretonin involving intramolecular methoxy rearrangement as well as the hydrolysis of the expanded D-ring and the methyl ester moiety. Finally, the nonheme iron-dependent dioxygenase trt7 accomplishes the last two oxidation reactions steps to complete the biosynthesis of terretonin. Terretonin C is produced via spontaneous decarboxylation of the terretonin precursor. Another shunt product of the terretonin biosynthesis is dihydrofarnesyl-DMOA, derived from epoxyfarnesyl-DMOA through hydrolysis of the epoxide. This chain is Non-reducing polyketide synthase trt4, found in Aspergillus terreus (strain NIH 2624 / FGSC A1156).